Reading from the N-terminus, the 282-residue chain is DNA-dependent metalloprotease WSS1 homolog 2 (282 aa).

A Ubiquitin-like domain is found at 1-75 (MELKFSCRGN…CLIRQDKDIV (75 aa)). Residues 99–274 (PHTTPKPASI…LLAAAERRKQ (176 aa)) enclose the WLM domain. His-202 serves as a coordination point for Zn(2+). Residue Glu-203 is part of the active site. Zn(2+) contacts are provided by His-206 and His-212. Residues 234 to 282 (GKPGSYVSDRASYTPQQDNDDEDQKNHRRDLLLAAAERRKQSGSKVQKE) are disordered. Residues 269 to 282 (AERRKQSGSKVQKE) are compositionally biased toward basic and acidic residues.

Belongs to the peptidase M3 family. WSS1-like metalloprotease (WLM) subfamily. Requires Zn(2+) as cofactor.

The protein resides in the cytoplasm. Its subcellular location is the nucleus. In terms of biological role, metalloendopeptidase that acts selectively on DNA-binding proteins. DNA is needed to bring the protease and substrates together to enable proteolysis. Involved in the repair of toxic DNA-protein cross-links (DPCs) such as covalently trapped topoisomerase 1 (TOP1) adducts on DNA lesions or DPCs induced by reactive compounds such as formaldehyde. The sequence is that of DNA-dependent metalloprotease WSS1 homolog 2 from Schizosaccharomyces pombe (strain 972 / ATCC 24843) (Fission yeast).